A 1116-amino-acid chain; its full sequence is Protein translocase subunit SecA (1116 aa).

ATP contacts are provided by residues Q177, 195–199 (GEGKT), and D692.

The protein belongs to the SecA family. Monomer and homodimer. Part of the essential Sec protein translocation apparatus which comprises SecA, SecYEG and auxiliary proteins SecDF. Other proteins may also be involved.

Its subcellular location is the cell inner membrane. It localises to the cytoplasm. It carries out the reaction ATP + H2O + cellular proteinSide 1 = ADP + phosphate + cellular proteinSide 2.. Its function is as follows. Part of the Sec protein translocase complex. Interacts with the SecYEG preprotein conducting channel. Has a central role in coupling the hydrolysis of ATP to the transfer of proteins into and across the cell membrane, serving as an ATP-driven molecular motor driving the stepwise translocation of polypeptide chains across the membrane. The polypeptide is Protein translocase subunit SecA (Flavobacterium psychrophilum (strain ATCC 49511 / DSM 21280 / CIP 103535 / JIP02/86)).